Here is a 186-residue protein sequence, read N- to C-terminus: Dynactin subunit 3 (186 aa).

Ala-2 bears the N-acetylalanine mark. Positions 135-157 form a coiled coil; sequence QQQDQCVEITEESKALLEEYNKT.

This sequence belongs to the dynactin subunit 3 family. Subunit of dynactin, a multiprotein complex part of a tripartite complex with dynein and a adapter, such as BICDL1, BICD2 or HOOK3. The dynactin complex is built around ACTR1A/ACTB filament and consists of an actin-related filament composed of a shoulder domain, a pointed end and a barbed end. Its length is defined by its flexible shoulder domain. The soulder is composed of 2 DCTN1 subunits, 4 DCTN2 and 2 DCTN3. The 4 DCNT2 (via N-terminus) bind the ACTR1A filament and act as molecular rulers to determine the length. The pointed end is important for binding dynein-dynactin cargo adapters. Consists of 4 subunits: ACTR10, DCNT4, DCTN5 and DCTN6. The barbed end is composed of a CAPZA1:CAPZB heterodimers, which binds ACTR1A/ACTB filament and dynactin and stabilizes dynactin. As to expression, ubiquitously expressed. Highly expressed in muscle and pancreas and detected at lower levels in brain.

The protein resides in the cytoplasm. It localises to the cytoskeleton. Its subcellular location is the microtubule organizing center. It is found in the centrosome. The protein localises to the chromosome. The protein resides in the centromere. It localises to the kinetochore. Its subcellular location is the spindle. It is found in the cleavage furrow. The protein localises to the midbody. In terms of biological role, part of the dynactin complex that activates the molecular motor dynein for ultra-processive transport along microtubules. Together with dynein may be involved in spindle assembly and cytokinesis. This Homo sapiens (Human) protein is Dynactin subunit 3.